The chain runs to 181 residues: Cytidylate kinase (181 aa).

Residue 7 to 15 (GPPGSGTTS) coordinates ATP.

It belongs to the cytidylate kinase family. Type 2 subfamily.

The protein localises to the cytoplasm. The enzyme catalyses CMP + ATP = CDP + ADP. It carries out the reaction dCMP + ATP = dCDP + ADP. This is Cytidylate kinase from Methanoculleus marisnigri (strain ATCC 35101 / DSM 1498 / JR1).